The following is a 189-amino-acid chain: Transcription factor E (189 aa).

An HTH TFE/IIEalpha-type domain is found at Ala-9–Asn-101.

The protein belongs to the TFE family. In terms of assembly, monomer. Interaction with RNA polymerase subunits RpoF and RpoE is necessary for Tfe stimulatory transcription activity. Able to interact with Tbp and RNA polymerase in the absence of DNA promoter. Interacts both with the preinitiation and elongation complexes.

Functionally, transcription factor that plays a role in the activation of archaeal genes transcribed by RNA polymerase. Facilitates transcription initiation by enhancing TATA-box recognition by TATA-box-binding protein (Tbp), and transcription factor B (Tfb) and RNA polymerase recruitment. Not absolutely required for transcription in vitro, but particularly important in cases where Tbp or Tfb function is not optimal. It dynamically alters the nucleic acid-binding properties of RNA polymerases by stabilizing the initiation complex and destabilizing elongation complexes. Seems to translocate with the RNA polymerase following initiation and acts by binding to the non template strand of the transcription bubble in elongation complexes. The chain is Transcription factor E from Aeropyrum pernix (strain ATCC 700893 / DSM 11879 / JCM 9820 / NBRC 100138 / K1).